The primary structure comprises 156 residues: Transcription antitermination protein NusB (156 aa).

It belongs to the NusB family.

Its function is as follows. Involved in transcription antitermination. Required for transcription of ribosomal RNA (rRNA) genes. Binds specifically to the boxA antiterminator sequence of the ribosomal RNA (rrn) operons. This chain is Transcription antitermination protein NusB, found in Rickettsia akari (strain Hartford).